The following is a 270-amino-acid chain: Formamidopyrimidine-DNA glycosylase (270 aa).

Pro2 functions as the Schiff-base intermediate with DNA in the catalytic mechanism. Glu3 functions as the Proton donor in the catalytic mechanism. Catalysis depends on Lys58, which acts as the Proton donor; for beta-elimination activity. The DNA site is built by His91, Arg110, and Lys151. An FPG-type zinc finger spans residues 236-270 (LVYGKAGAPCTECNTPLKEIRMNNRSTVYCPRCQR). The active-site Proton donor; for delta-elimination activity is Arg260.

The protein belongs to the FPG family. As to quaternary structure, monomer. It depends on Zn(2+) as a cofactor.

The catalysed reaction is Hydrolysis of DNA containing ring-opened 7-methylguanine residues, releasing 2,6-diamino-4-hydroxy-5-(N-methyl)formamidopyrimidine.. It carries out the reaction 2'-deoxyribonucleotide-(2'-deoxyribose 5'-phosphate)-2'-deoxyribonucleotide-DNA = a 3'-end 2'-deoxyribonucleotide-(2,3-dehydro-2,3-deoxyribose 5'-phosphate)-DNA + a 5'-end 5'-phospho-2'-deoxyribonucleoside-DNA + H(+). Functionally, involved in base excision repair of DNA damaged by oxidation or by mutagenic agents. Acts as a DNA glycosylase that recognizes and removes damaged bases. Has a preference for oxidized purines, such as 7,8-dihydro-8-oxoguanine (8-oxoG). Has AP (apurinic/apyrimidinic) lyase activity and introduces nicks in the DNA strand. Cleaves the DNA backbone by beta-delta elimination to generate a single-strand break at the site of the removed base with both 3'- and 5'-phosphates. The polypeptide is Formamidopyrimidine-DNA glycosylase (Marinobacter nauticus (strain ATCC 700491 / DSM 11845 / VT8) (Marinobacter aquaeolei)).